Here is a 314-residue protein sequence, read N- to C-terminus: Solute carrier family 25 member 44 (314 aa).

Solcar repeat units lie at residues 18-100, 107-210, and 220-302; these read KKFY…TRKF, SNTV…YAEQ, and PHIV…LKKL. A run of 6 helical transmembrane segments spans residues 20–42, 71–90, 113–133, 185–201, 222–239, and 278–296; these read FYVFGVAMTMMIRVSVYPFTLIR, TGLYRGFLVNTFTLISGQCY, LVAGGSASLVAQSITVPIDVV, GYVASLLTYIPNSAVWW, IVFQAVSGPLAAATASIL, and LSARIISATPSTIVIVVGY.

The protein belongs to the mitochondrial carrier (TC 2.A.29) family.

It is found in the mitochondrion membrane. The catalysed reaction is L-valine(in) = L-valine(out). The enzyme catalyses L-leucine(in) = L-leucine(out). Mitochondrial solute transporter which transports branched-chain amino acid (BCAA; valine, leucine and isoleucine) into mitochondria in brown adipose tissue (BAT). BAT is involved in BCAA catabolism and actively utilizes BCAA in the mitochondria for thermogenesis. The protein is Solute carrier family 25 member 44 of Homo sapiens (Human).